We begin with the raw amino-acid sequence, 218 residues long: Embryonic polyadenylate-binding protein 2-B (218 aa).

2 disordered regions span residues 1-24 and 169-218; these read MSER…ELDD and RTNM…NNPY. Positions 93-170 constitute an RRM domain; the sequence is RSVYVGNVDY…RTIKVLPKRT (78 aa). A compositionally biased stretch (basic residues) spans 198–209; the sequence is QRPRGRPFRGRG.

As to quaternary structure, homodimer; Upon poly(A) binding, undergoes a dimer-monomer transition that removes the polyproline motif from the RNA recognition site and allows it to be replaced by the adenosine nucleotides of poly(A).

The protein localises to the cytoplasm. In terms of biological role, binds the poly(A) tail of mRNA. Unable to interact with the cap-binding complex and is therefore unlikely to be involved in translation initiation. The protein is Embryonic polyadenylate-binding protein 2-B (Pabpn1l-b) of Xenopus laevis (African clawed frog).